We begin with the raw amino-acid sequence, 188 residues long: Pyridoxal 5'-phosphate synthase subunit PdxT (188 aa).

46-48 (GES) lines the L-glutamine pocket. Residue cysteine 78 is the Nucleophile of the active site. L-glutamine contacts are provided by residues arginine 106 and 132–133 (IR). Catalysis depends on charge relay system residues histidine 169 and glutamate 171.

Belongs to the glutaminase PdxT/SNO family. In the presence of PdxS, forms a dodecamer of heterodimers. Only shows activity in the heterodimer.

It catalyses the reaction aldehydo-D-ribose 5-phosphate + D-glyceraldehyde 3-phosphate + L-glutamine = pyridoxal 5'-phosphate + L-glutamate + phosphate + 3 H2O + H(+). The enzyme catalyses L-glutamine + H2O = L-glutamate + NH4(+). Its pathway is cofactor biosynthesis; pyridoxal 5'-phosphate biosynthesis. Catalyzes the hydrolysis of glutamine to glutamate and ammonia as part of the biosynthesis of pyridoxal 5'-phosphate. The resulting ammonia molecule is channeled to the active site of PdxS. The sequence is that of Pyridoxal 5'-phosphate synthase subunit PdxT from Tropheryma whipplei (strain Twist) (Whipple's bacillus).